The following is a 103-amino-acid chain: Small ribosomal subunit protein uS10 (103 aa).

It belongs to the universal ribosomal protein uS10 family. Part of the 30S ribosomal subunit.

Involved in the binding of tRNA to the ribosomes. In Hahella chejuensis (strain KCTC 2396), this protein is Small ribosomal subunit protein uS10.